The primary structure comprises 122 residues: Large ribosomal subunit protein uL14 (122 aa).

Belongs to the universal ribosomal protein uL14 family. Part of the 50S ribosomal subunit. Forms a cluster with proteins L3 and L19. In the 70S ribosome, L14 and L19 interact and together make contacts with the 16S rRNA in bridges B5 and B8.

Binds to 23S rRNA. Forms part of two intersubunit bridges in the 70S ribosome. The sequence is that of Large ribosomal subunit protein uL14 from Rhizobium etli (strain CIAT 652).